Here is a 556-residue protein sequence, read N- to C-terminus: Arginine--tRNA ligase (556 aa).

The short motif at 132 to 142 (ANPTGDLHLGH) is the 'HIGH' region element.

This sequence belongs to the class-I aminoacyl-tRNA synthetase family. As to quaternary structure, monomer.

Its subcellular location is the cytoplasm. It catalyses the reaction tRNA(Arg) + L-arginine + ATP = L-arginyl-tRNA(Arg) + AMP + diphosphate. This is Arginine--tRNA ligase from Listeria monocytogenes serotype 4b (strain CLIP80459).